A 292-amino-acid chain; its full sequence is Phosphoribosylaminoimidazole-succinocarboxamide synthase (292 aa).

The protein belongs to the SAICAR synthetase family.

It carries out the reaction 5-amino-1-(5-phospho-D-ribosyl)imidazole-4-carboxylate + L-aspartate + ATP = (2S)-2-[5-amino-1-(5-phospho-beta-D-ribosyl)imidazole-4-carboxamido]succinate + ADP + phosphate + 2 H(+). Its pathway is purine metabolism; IMP biosynthesis via de novo pathway; 5-amino-1-(5-phospho-D-ribosyl)imidazole-4-carboxamide from 5-amino-1-(5-phospho-D-ribosyl)imidazole-4-carboxylate: step 1/2. This Elusimicrobium minutum (strain Pei191) protein is Phosphoribosylaminoimidazole-succinocarboxamide synthase.